The sequence spans 288 residues: Ankyrin repeat and SOCS box protein 8 (288 aa).

Ser-17 bears the Phosphoserine mark. ANK repeat units lie at residues 52–81 (GTLK…EVNA), 85–113 (YNRT…NPNA), 117–146 (NRDT…SVNA), and 150–179 (NNDT…EVRV). Residues 235-288 (QLCEKLTVLCSAPGTLKTLARYAVRRSLGLQYLPDAVKGLPLPASLKEYLLLLE) form the SOCS box domain.

It belongs to the ankyrin SOCS box (ASB) family. As to quaternary structure, interacts with TBK1; this interaction promotes TBK1 proteasomal degradation. In terms of processing, phosphorylated by TBK1.

The protein localises to the cytoplasm. Its pathway is protein modification; protein ubiquitination. Functionally, may be a substrate-recognition component of a SCF-like ECS (Elongin-Cullin-SOCS-box protein) E3 ubiquitin-protein ligase complex which mediates the ubiquitination and subsequent proteasomal degradation of target proteins. Inhibits IFN-beta production through the IRF3 signaling pathway by targeting TBK1 via 'Lys-48'-linked ubiquitination, leading to its proteasomal degradation. The chain is Ankyrin repeat and SOCS box protein 8 (ASB8) from Macaca fascicularis (Crab-eating macaque).